The sequence spans 283 residues: MFS-type transporter eupM (283 aa).

7 helical membrane-spanning segments follow: residues 68–88 (LVAW…WGAM), 111–131 (IAWI…VAGP), 136–156 (GGFK…YMML), 165–185 (VLLA…TPMI), 196–216 (IGLA…VYPI), 227–247 (FAWT…IPII), and 263–283 (LIDL…ATMI).

It belongs to the major facilitator superfamily. Monocarboxylate porter (TC 2.A.1.13) family.

The protein resides in the membrane. MFS-type transporter; part of the gene cluster that mediates the biosynthesis of eupenifeldin, a bistropolone meroterpenoid that acts as an antitumor agent. This chain is MFS-type transporter eupM, found in Phoma sp.